Consider the following 450-residue polypeptide: MSNSDLELSNAASPPPVELDNSQVDEIINNVRCVAIPWQGYQRSGSLEENELQEIENLTGKPLSAYVKTAEEDTTAYSNLFLKLLSMKDTPDVVNFALVKLADTLLNSNKFLSAFGPAFYDFLEKDESYINYLDDDSKLLFARVFALCSSSSPCSVAKAFTLFLEYLGKLMQSLNPLTRLFAVQCLNGVLTLKAHRYALWAENTCSFRLAELLRNSIGDTQLQYYSLFCFWQLTFESHIAQDINKRFDLIKLLVQIIRSDTKTKVYRLVLAILVNLIDKAPKDTISTMLLEHVDKAVQLLQKRKWADEDITNYLDFITSTLDESSKHLSTFDMYKSELDTGILHWSPSHRSEDFWHQNAKRLNEDNYALLKKLFHIVQYNEDNTSLAVACHDLGAYIRSYPEGRSLIIKYGAKQRIMDLMSHPDPEVRFEALSTVQLLMTEVCFLSKITL.

This sequence belongs to the V-ATPase H subunit family. As to quaternary structure, V-ATPase is a heteromultimeric enzyme composed of a peripheral catalytic V1 complex (components A to H) attached to an integral membrane V0 proton pore complex (components: a, c, c', c'', d, e, f and VOA1).

The protein localises to the vacuole membrane. In terms of biological role, subunit of the V1 complex of vacuolar(H+)-ATPase (V-ATPase), a multisubunit enzyme composed of a peripheral complex (V1) that hydrolyzes ATP and a membrane integral complex (V0) that translocates protons. V-ATPase is responsible for acidifying and maintaining the pH of intracellular compartments. This subunit is essential for activity, but not assembly, of the enzyme complex. This subunit is also required for silencing the ATPase activity of V-ATPase when V1 is detached from V0. The sequence is that of V-type proton ATPase subunit H (vma13) from Schizosaccharomyces pombe (strain 972 / ATCC 24843) (Fission yeast).